Reading from the N-terminus, the 231-residue chain is Translin-associated protein X homolog (231 aa).

It belongs to the translin family.

Its subcellular location is the cytoplasm. It is found in the nucleus. The sequence is that of Translin-associated protein X homolog from Schizosaccharomyces pombe (strain 972 / ATCC 24843) (Fission yeast).